The sequence spans 152 residues: Flagellar assembly factor FliW (152 aa).

Belongs to the FliW family. As to quaternary structure, interacts with translational regulator CsrA and flagellin(s).

The protein resides in the cytoplasm. In terms of biological role, acts as an anti-CsrA protein, binds CsrA and prevents it from repressing translation of its target genes, one of which is flagellin. Binds to flagellin and participates in the assembly of the flagellum. The sequence is that of Flagellar assembly factor FliW from Caldicellulosiruptor saccharolyticus (strain ATCC 43494 / DSM 8903 / Tp8T 6331).